Consider the following 178-residue polypeptide: UPF0302 protein Bcer98_1244 (178 aa).

The protein belongs to the UPF0302 family.

In Bacillus cytotoxicus (strain DSM 22905 / CIP 110041 / 391-98 / NVH 391-98), this protein is UPF0302 protein Bcer98_1244.